Reading from the N-terminus, the 1163-residue chain is Carbamoyl phosphate synthase large chain (1163 aa).

Positions 1-456 are carboxyphosphate synthetic domain; sequence MPKRQDIKSI…SLQKALRGLE (456 aa). Position 129 (arginine 129) interacts with ATP. Residues 148 to 170 form a disordered region; that stretch reads LANATDIKDHDRKSHEAERSALK. The segment covering 153–170 has biased composition (basic and acidic residues); that stretch reads DIKDHDRKSHEAERSALK. The ATP-grasp 1 domain maps to 185–381; the sequence is LENQWNLGEG…IAKIAAKLAV (197 aa). The ATP site is built by arginine 222, glycine 228, glycine 229, glutamate 261, valine 263, glutamate 268, glycine 294, valine 295, histidine 296, glutamine 338, and glutamate 352. Glutamine 338, glutamate 352, and asparagine 354 together coordinate Mg(2+). Positions 338, 352, and 354 each coordinate Mn(2+). The segment at 457–614 is oligomerization domain; sequence TGLTGLDEIE…PFVGAARSEA (158 aa). A carbamoyl phosphate synthetic domain region spans residues 615–1026; it reads QVSDRKKVVI…AFAKSQLGAG (412 aa). One can recognise an ATP-grasp 2 domain in the interval 743-955; it reads QKLLMKLDLN…IAKIAARVMA (213 aa). Arginine 779, serine 839, leucine 841, glutamate 846, glycine 871, isoleucine 872, histidine 873, serine 874, glutamine 914, and glutamate 926 together coordinate ATP. 3 residues coordinate Mg(2+): glutamine 914, glutamate 926, and asparagine 928. Mn(2+) contacts are provided by glutamine 914, glutamate 926, and asparagine 928. The MGS-like domain occupies 1027–1163; that stretch reads VDLPRDGTVF…VRPLQSYFET (137 aa). The interval 1027–1163 is allosteric domain; the sequence is VDLPRDGTVF…VRPLQSYFET (137 aa).

It belongs to the CarB family. In terms of assembly, composed of two chains; the small (or glutamine) chain promotes the hydrolysis of glutamine to ammonia, which is used by the large (or ammonia) chain to synthesize carbamoyl phosphate. Tetramer of heterodimers (alpha,beta)4. It depends on Mg(2+) as a cofactor. Mn(2+) is required as a cofactor.

The enzyme catalyses hydrogencarbonate + L-glutamine + 2 ATP + H2O = carbamoyl phosphate + L-glutamate + 2 ADP + phosphate + 2 H(+). The catalysed reaction is hydrogencarbonate + NH4(+) + 2 ATP = carbamoyl phosphate + 2 ADP + phosphate + 2 H(+). The protein operates within amino-acid biosynthesis; L-arginine biosynthesis; carbamoyl phosphate from bicarbonate: step 1/1. It functions in the pathway pyrimidine metabolism; UMP biosynthesis via de novo pathway; (S)-dihydroorotate from bicarbonate: step 1/3. In terms of biological role, large subunit of the glutamine-dependent carbamoyl phosphate synthetase (CPSase). CPSase catalyzes the formation of carbamoyl phosphate from the ammonia moiety of glutamine, carbonate, and phosphate donated by ATP, constituting the first step of 2 biosynthetic pathways, one leading to arginine and/or urea and the other to pyrimidine nucleotides. The large subunit (synthetase) binds the substrates ammonia (free or transferred from glutamine from the small subunit), hydrogencarbonate and ATP and carries out an ATP-coupled ligase reaction, activating hydrogencarbonate by forming carboxy phosphate which reacts with ammonia to form carbamoyl phosphate. This chain is Carbamoyl phosphate synthase large chain, found in Rhizobium meliloti (strain 1021) (Ensifer meliloti).